The primary structure comprises 185 residues: Elongation factor P (185 aa).

Belongs to the elongation factor P family.

It is found in the cytoplasm. Its pathway is protein biosynthesis; polypeptide chain elongation. In terms of biological role, involved in peptide bond synthesis. Stimulates efficient translation and peptide-bond synthesis on native or reconstituted 70S ribosomes in vitro. Probably functions indirectly by altering the affinity of the ribosome for aminoacyl-tRNA, thus increasing their reactivity as acceptors for peptidyl transferase. The chain is Elongation factor P from Bacillus cereus (strain G9842).